The primary structure comprises 1104 residues: General transcription factor II-I repeat domain-containing protein 1 (1104 aa).

Residues K27, K184, K212, K225, K238, K271, K337, K436, K439, and K443 each participate in a glycyl lysine isopeptide (Lys-Gly) (interchain with G-Cter in SUMO2) cross-link. One copy of the GTF2I-like 1 repeat lies at 119-213; it reads LEQCSDVYLL…PDDGGQDTKA (95 aa). The stretch at 342-436 is one GTF2I-like 2 repeat; that stretch reads IKEMEDINTL…FDERIFTGNK (95 aa). S448 carries the phosphoserine modification. The tract at residues 509–559 is disordered; the sequence is SDPSPTSEEMTDSLPGHLPSEDSGYGMEMPADKGPSEEPWSEERPAEESPG. Basic and acidic residues predominate over residues 538-555; it reads PADKGPSEEPWSEERPAE. The GTF2I-like 3 repeat unit spans residues 556-650; sequence ESPGDVIRPL…ELLTDGVKEP (95 aa). Residues K567, K579, K588, K622, K638, K669, K709, K717, K757, K759, and K772 each participate in a glycyl lysine isopeptide (Lys-Gly) (interchain with G-Cter in SUMO2) cross-link. A GTF2I-like 4 repeat occupies 681 to 775; the sequence is LSRIDIANTL…FQGLIPKPET (95 aa). The segment at 783–802 is disordered; that stretch reads EAGKTTRPRRLQQDTWQPDE. A GTF2I-like 5 repeat occupies 805-899; it reads ANRLGEKVIL…LQPFAEVCND (95 aa). Glycyl lysine isopeptide (Lys-Gly) (interchain with G-Cter in SUMO2) cross-links involve residues K841 and K901. One copy of the GTF2I-like 6 repeat lies at 908-1002; sequence SNKLGKKVIL…LQPFGDVCNN (95 aa). Disordered regions lie at residues 1001-1044 and 1058-1104; these read NNAK…VAST and LHPN…LPTR. Positions 1012–1019 match the Nuclear localization signal motif; sequence PKRKRKRV. Low complexity predominate over residues 1021-1043; it reads EGNSVSSSSSSSSSSSNPESVAS.

Belongs to the TFII-I family. In terms of assembly, interacts with the retinoblastoma protein (RB1) via its C-terminus. Widely expressed.

It localises to the nucleus. In terms of biological role, may be a transcription regulator involved in cell-cycle progression and skeletal muscle differentiation. May repress GTF2I transcriptional functions, by preventing its nuclear residency, or by inhibiting its transcriptional activation. May contribute to slow-twitch fiber type specificity during myogenesis and in regenerating muscles. Binds troponin I slow-muscle fiber enhancer (USE B1). Binds specifically and with high affinity to the EFG sequences derived from the early enhancer of HOXC8. This Mus musculus (Mouse) protein is General transcription factor II-I repeat domain-containing protein 1 (Gtf2ird1).